Here is a 227-residue protein sequence, read N- to C-terminus: Ubiquitin carboxyl-terminal hydrolase (227 aa).

A UCH catalytic domain is found at 3–224 (TWTPLESNPE…VRFTVLALTA (222 aa)). The active-site Nucleophile is the cysteine 93. Residue histidine 164 is the Proton donor of the active site.

The protein belongs to the peptidase C12 family.

The enzyme catalyses Thiol-dependent hydrolysis of ester, thioester, amide, peptide and isopeptide bonds formed by the C-terminal Gly of ubiquitin (a 76-residue protein attached to proteins as an intracellular targeting signal).. In terms of biological role, ubiquitin-protein hydrolase is involved both in the processing of ubiquitin precursors and of ubiquitinated proteins. This enzyme is a thiol protease that recognizes and hydrolyzes a peptide bond at the C-terminal glycine of ubiquitin. The sequence is that of Ubiquitin carboxyl-terminal hydrolase (Uch) from Drosophila melanogaster (Fruit fly).